Consider the following 314-residue polypeptide: Methionyl-tRNA formyltransferase (314 aa).

Position 112–115 (112–115 (SLLP)) interacts with (6S)-5,6,7,8-tetrahydrofolate.

Belongs to the Fmt family.

The catalysed reaction is L-methionyl-tRNA(fMet) + (6R)-10-formyltetrahydrofolate = N-formyl-L-methionyl-tRNA(fMet) + (6S)-5,6,7,8-tetrahydrofolate + H(+). In terms of biological role, attaches a formyl group to the free amino group of methionyl-tRNA(fMet). The formyl group appears to play a dual role in the initiator identity of N-formylmethionyl-tRNA by promoting its recognition by IF2 and preventing the misappropriation of this tRNA by the elongation apparatus. This chain is Methionyl-tRNA formyltransferase, found in Buchnera aphidicola subsp. Schizaphis graminum (strain Sg).